The chain runs to 427 residues: Enolase (427 aa).

Gln-163 contributes to the (2R)-2-phosphoglycerate binding site. The Proton donor role is filled by Glu-205. Residues Asp-242, Glu-285, and Asp-312 each contribute to the Mg(2+) site. Lys-337, Arg-366, Ser-367, and Lys-388 together coordinate (2R)-2-phosphoglycerate. The Proton acceptor role is filled by Lys-337.

This sequence belongs to the enolase family. Mg(2+) is required as a cofactor.

It localises to the cytoplasm. Its subcellular location is the secreted. It is found in the cell surface. It catalyses the reaction (2R)-2-phosphoglycerate = phosphoenolpyruvate + H2O. The protein operates within carbohydrate degradation; glycolysis; pyruvate from D-glyceraldehyde 3-phosphate: step 4/5. Catalyzes the reversible conversion of 2-phosphoglycerate (2-PG) into phosphoenolpyruvate (PEP). It is essential for the degradation of carbohydrates via glycolysis. This is Enolase from Burkholderia mallei (strain NCTC 10247).